The chain runs to 404 residues: Acetate kinase (404 aa).

N9 contributes to the Mg(2+) binding site. K16 is a binding site for ATP. R100 serves as a coordination point for substrate. Catalysis depends on D157, which acts as the Proton donor/acceptor. ATP is bound by residues 215 to 219 (HLGNG), 290 to 292 (DMR), and 335 to 339 (GIGEN). Residue E386 participates in Mg(2+) binding.

This sequence belongs to the acetokinase family. In terms of assembly, homodimer. The cofactor is Mg(2+). Mn(2+) is required as a cofactor.

The protein resides in the cytoplasm. It catalyses the reaction acetate + ATP = acetyl phosphate + ADP. It functions in the pathway metabolic intermediate biosynthesis; acetyl-CoA biosynthesis; acetyl-CoA from acetate: step 1/2. In terms of biological role, catalyzes the formation of acetyl phosphate from acetate and ATP. Can also catalyze the reverse reaction. This chain is Acetate kinase, found in Methylocella silvestris (strain DSM 15510 / CIP 108128 / LMG 27833 / NCIMB 13906 / BL2).